Reading from the N-terminus, the 303-residue chain is GTPase Era (303 aa).

Positions 8 to 176 (YCGFIAIVGR…ASIVRKHMPE (169 aa)) constitute an Era-type G domain. The tract at residues 16–23 (GRPNVGKS) is G1. 16–23 (GRPNVGKS) provides a ligand contact to GTP. The segment at 42–46 (QTTRH) is G2. The G3 stretch occupies residues 63–66 (DTPG). Residues 63 to 67 (DTPGL) and 125 to 128 (NKVD) contribute to the GTP site. Residues 125 to 128 (NKVD) form a G4 region. Residues 155 to 157 (ISA) are G5. The region spanning 207-284 (LGEELPYSVT…HLELWVKVKS (78 aa)) is the KH type-2 domain.

The protein belongs to the TRAFAC class TrmE-Era-EngA-EngB-Septin-like GTPase superfamily. Era GTPase family. Monomer.

Its subcellular location is the cytoplasm. It localises to the cell inner membrane. In terms of biological role, an essential GTPase that binds both GDP and GTP, with rapid nucleotide exchange. Plays a role in 16S rRNA processing and 30S ribosomal subunit biogenesis and possibly also in cell cycle regulation and energy metabolism. This chain is GTPase Era, found in Yersinia pseudotuberculosis serotype O:1b (strain IP 31758).